An 81-amino-acid polypeptide reads, in one-letter code: Photosystem I iron-sulfur center (81 aa).

4Fe-4S ferredoxin-type domains lie at 2–31 (AHTV…MVPW) and 39–68 (IASA…IRVY). [4Fe-4S] cluster contacts are provided by Cys-11, Cys-14, Cys-17, Cys-21, Cys-48, Cys-51, Cys-54, and Cys-58.

In terms of assembly, the eukaryotic PSI reaction center is composed of at least 11 subunits. [4Fe-4S] cluster serves as cofactor.

The protein localises to the plastid. It localises to the cyanelle thylakoid membrane. The catalysed reaction is reduced [plastocyanin] + hnu + oxidized [2Fe-2S]-[ferredoxin] = oxidized [plastocyanin] + reduced [2Fe-2S]-[ferredoxin]. Apoprotein for the two 4Fe-4S centers FA and FB of photosystem I (PSI); essential for photochemical activity. FB is the terminal electron acceptor of PSI, donating electrons to ferredoxin. The C-terminus interacts with PsaA/B/D and helps assemble the protein into the PSI complex. Required for binding of PsaD and PsaE to PSI. PSI is a cytochrome c6-ferredoxin oxidoreductase, converting photonic excitation into a charge separation, which transfers an electron from the donor P700 chlorophyll pair to the spectroscopically characterized acceptors A0, A1, FX, FA and FB in turn. The protein is Photosystem I iron-sulfur center of Cyanophora paradoxa.